The chain runs to 878 residues: Longitudinals lacking protein, isoforms N/O/W/X/Y (878 aa).

One can recognise a BTB domain in the interval 32–97 (VDCTLAAEGK…MYRGEVNISQ (66 aa)). 3 disordered regions span residues 115 to 200 (LSDN…SSVL), 228 to 340 (SSGP…ASAS), and 542 to 583 (QIVK…QTHA). Composition is skewed to low complexity over residues 162–175 (SGDV…SSSP), 228–251 (SSGP…LTST), 263–293 (TSST…QTTS), 329–340 (NSATGPNPASAS), and 546–569 (QQHQ…QQQQ). The C2H2-type 1; degenerate zinc-finger motif lies at 709–731 (YACNVCGKTYKIKGSLKRHKNYE). A C2H2-type 2 zinc finger spans residues 794-816 (FQCDFCLKWFKRRSHLNRHKKLH). Positions 826–863 (SKQKPKTTSGQNLSHDANTDDEVATTNPAATEDESNYP) are disordered. Polar residues predominate over residues 831–841 (KTTSGQNLSHD).

By stage 11, isoform W, isoform X and isoform Y are expressed throughout the mesoderm, whereas isoform O is expressed in both mesoderm and ectoderm. From stage 15, expression of isoform O expands to all tissues, whereas expression of isoform W, isoform X and isoform Y becomes restricted during later stages; starting from stage 14 to 16, isoform W, isoform X and isoform Y are expressed in muscle. From stages 14 and 15, isoform W and isoform Y are expressed in the gut. For some isoforms, expression is also seen in specific types of cells in the embryo; isoform O is expressed in the ventral furrow at stage 5 and in the dorsal epidermis from stage 7. Isoform Y shows prominent expression in the gonad starting at stage 15.

The protein localises to the nucleus. Its function is as follows. Putative transcription factor required for axon growth and guidance in the central and peripheral nervous systems. Repels CNS axons away from the midline by promoting the expression of the midline repellent sli and its receptor robo. The sequence is that of Longitudinals lacking protein, isoforms N/O/W/X/Y from Drosophila melanogaster (Fruit fly).